Reading from the N-terminus, the 264-residue chain is Gap junction beta-1 protein (264 aa).

Over 1-22 (MNWAGLYAILSGVNRHSTSIGR) the chain is Cytoplasmic. Residues 23 to 45 (IWLSVVFIFRIMVLVAAAESVWG) form a helical membrane-spanning segment. At 46–75 (DEKSAFTCNTQQPGCNSVCYDHFFPISHIR) the chain is on the extracellular side. A helical membrane pass occupies residues 76–98 (LWALQLIIVSTPALLVAMHVAHL). The Cytoplasmic portion of the chain corresponds to 99 to 130 (QHQEKKELRLSRHVKDQELAEVKKHKVKISGT). A helical transmembrane segment spans residues 131–153 (LWWTYISSVFFRIIFEAAFMYIF). At 154–191 (YLIYPGYSMIRLLKCDAYPCPNTVDCFVSRPTEKTIFT) the chain is on the extracellular side. Residues 192–214 (VFMLVASGVCIVLNVAEVFFLIA) traverse the membrane as a helical segment. Residues 215-264 (QACTRRARRHRDSGSISKEHQQNEMNLLITGGSIIKRSAGQEKGDHCSTS) are Cytoplasmic-facing.

It belongs to the connexin family. Beta-type (group I) subfamily. In terms of assembly, a connexon is composed of a hexamer of connexins. Lung, liver, intestines, stomach and kidney.

The protein resides in the cell membrane. Its subcellular location is the cell junction. It localises to the gap junction. One gap junction consists of a cluster of closely packed pairs of transmembrane channels, the connexons, through which materials of low MW diffuse from one cell to a neighboring cell. The protein is Gap junction beta-1 protein (gjb1) of Xenopus laevis (African clawed frog).